The chain runs to 126 residues: Fluoride-specific ion channel FluC (126 aa).

A run of 4 helical transmembrane segments spans residues 5 to 25 (ILCV…FYFG), 34 to 54 (YIFI…GFVL), 71 to 91 (VTGL…NAVF), and 100 to 120 (FFLN…LGIY). Positions 76 and 79 each coordinate Na(+).

The protein belongs to the fluoride channel Fluc/FEX (TC 1.A.43) family.

It localises to the cell inner membrane. The catalysed reaction is fluoride(in) = fluoride(out). Na(+) is not transported, but it plays an essential structural role and its presence is essential for fluoride channel function. Fluoride-specific ion channel. Important for reducing fluoride concentration in the cell, thus reducing its toxicity. This Campylobacter hominis (strain ATCC BAA-381 / DSM 21671 / CCUG 45161 / LMG 19568 / NCTC 13146 / CH001A) protein is Fluoride-specific ion channel FluC.